The primary structure comprises 228 residues: Urease accessory protein UreF (228 aa).

Belongs to the UreF family. UreD, UreF and UreG form a complex that acts as a GTP-hydrolysis-dependent molecular chaperone, activating the urease apoprotein by helping to assemble the nickel containing metallocenter of UreC. The UreE protein probably delivers the nickel.

It localises to the cytoplasm. Functionally, required for maturation of urease via the functional incorporation of the urease nickel metallocenter. This Yersinia pseudotuberculosis serotype IB (strain PB1/+) protein is Urease accessory protein UreF.